The chain runs to 66 residues: Large ribosomal subunit protein bL35 (66 aa).

Belongs to the bacterial ribosomal protein bL35 family.

This chain is Large ribosomal subunit protein bL35, found in Wigglesworthia glossinidia brevipalpis.